A 443-amino-acid polypeptide reads, in one-letter code: MMEESGIETTPPGTPPPHSAGLAAVPSTEAHLAVTSSFSSPNTSGMETVPPHSHSTPQPSLPPVQPSAPPPFVPLSPAPSTPLSGTSVPPSVSPSPATAFSGPPLSHFPPATSASGALLSAPPSGPPISGFSVGTTYDITRGHAGRAPQTPLMPSFSAPPVTGILPAPITQQASMTSLAQGPGTTSAITFPEEQEDPRISRGQDDAPAGGIWGFIKGVAGNPMVKSVLDKTKHSVESMITTLDPGMAPYIKSGGELDIVVTSNKEVKVAAVRDAFQEVFGLAVVVGEAGQSNIAPQPVGYAAGLKGAQERIDSLRRSGTIHEKQTAVSVENFIAELLPDKWFDIGCLVVEDPVHGIRLEAFTQATPVPLEFVQQAQSLTPQDYNLRWSGLLVTVGEVLEKSLLNVTRTDWHLAFTGMSRRQMIYSAAKALAGMYKQRLPPRPL.

Disordered stretches follow at residues 1-108 and 139-206; these read MMEE…LSHF and ITRG…QDDA. A compositionally biased stretch (polar residues) spans 34-46; the sequence is VTSSFSSPNTSGM. A compositionally biased stretch (pro residues) spans 59–80; it reads PSLPPVQPSAPPPFVPLSPAPS. Low complexity predominate over residues 81-96; that stretch reads TPLSGTSVPPSVSPSP. Residues 169-188 are compositionally biased toward polar residues; that stretch reads ITQQASMTSLAQGPGTTSAI.

This sequence belongs to the PRRC1 family. In terms of assembly, interacts with PRKAR1A; resulting in PKA activation.

The protein localises to the golgi apparatus. It localises to the cytoplasm. In terms of biological role, may act as a regulator of the protein kinase A (PKA) during embryonic development. The chain is Protein PRRC1 (Prrc1) from Rattus norvegicus (Rat).